We begin with the raw amino-acid sequence, 1726 residues long: Probable serine/threonine-protein kinase roco4 (1726 aa).

4 LRR repeats span residues 256-277, 280-301, 303-324, and 326-347; these read KGKR…ITQM, HLVE…IQLL, SLRI…ICYL, and DLKI…VVQS. The Roc domain occupies 364 to 544; sequence KSETWNKVKL…KRLIHEAEKS (181 aa). Residues 377-384, 428-432, and 487-490 each bind GTP; these read GQEGVGKT, DFGGQ, and THSD. Residues 591 to 787 enclose the COR domain; sequence AINSQKERYI…RTYWRNGVLL (197 aa). Residues 800–881 are compositionally biased toward low complexity; it reads SKQQQLQQQQ…STLNSQQLIN (82 aa). Residues 800–890 form a disordered region; it reads SKQQQLQQQQ…NPSVSPLSST (91 aa). Residues 1026–1292 enclose the Protein kinase domain; it reads IEYEKQIGKG…SYIVKELSEL (267 aa). Residues 1032–1040 and lysine 1055 contribute to the ATP site; that span reads IGKGGFGLV. Aspartate 1154 acts as the Proton acceptor in catalysis. Residues 1319–1331 are compositionally biased toward polar residues; that stretch reads ASTSSNADDGSQT. A disordered region spans residues 1319-1385; that stretch reads ASTSSNADDG…SSPSTSFINS (67 aa). Residues 1332–1348 are compositionally biased toward low complexity; that stretch reads NNNNNNNNNNNNNNNNN. Positions 1349–1364 are enriched in polar residues; sequence SGSSIALSPSRSFEQQ. Low complexity predominate over residues 1365–1381; that stretch reads TTTTTTTTTSPSSPSTS. 6 WD repeats span residues 1422 to 1461, 1463 to 1502, 1506 to 1546, 1589 to 1627, 1633 to 1670, and 1674 to 1714; these read SVHK…LINE, KCPH…IVQQ, PHKG…KKHS, KHST…ELQK, AHHE…KPFT, and HHKQ…EKKT.

Belongs to the protein kinase superfamily. TKL Ser/Thr protein kinase family. ROCO subfamily.

The enzyme catalyses L-seryl-[protein] + ATP = O-phospho-L-seryl-[protein] + ADP + H(+). It catalyses the reaction L-threonyl-[protein] + ATP = O-phospho-L-threonyl-[protein] + ADP + H(+). This Dictyostelium discoideum (Social amoeba) protein is Probable serine/threonine-protein kinase roco4 (roco4).